The chain runs to 471 residues: Proline--tRNA ligase 2 (471 aa).

Belongs to the class-II aminoacyl-tRNA synthetase family. ProS type 3 subfamily. In terms of assembly, homodimer.

The protein localises to the cytoplasm. The enzyme catalyses tRNA(Pro) + L-proline + ATP = L-prolyl-tRNA(Pro) + AMP + diphosphate. Its function is as follows. Catalyzes the attachment of proline to tRNA(Pro) in a two-step reaction: proline is first activated by ATP to form Pro-AMP and then transferred to the acceptor end of tRNA(Pro). This is Proline--tRNA ligase 2 from Streptomyces avermitilis (strain ATCC 31267 / DSM 46492 / JCM 5070 / NBRC 14893 / NCIMB 12804 / NRRL 8165 / MA-4680).